An 88-amino-acid chain; its full sequence is MLTTQDKQNIIKENQQSEGDTGSPEVQVALLTARINDLQGHFATHKKDNHSRRGLLRLVSQRRKLLDYLHGKDVERYRALIKKLNLRR.

A compositionally biased stretch (polar residues) spans 1 to 20 (MLTTQDKQNIIKENQQSEGD). The interval 1 to 24 (MLTTQDKQNIIKENQQSEGDTGSP) is disordered.

It belongs to the universal ribosomal protein uS15 family. In terms of assembly, part of the 30S ribosomal subunit. Forms a bridge to the 50S subunit in the 70S ribosome, contacting the 23S rRNA.

One of the primary rRNA binding proteins, it binds directly to 16S rRNA where it helps nucleate assembly of the platform of the 30S subunit by binding and bridging several RNA helices of the 16S rRNA. Functionally, forms an intersubunit bridge (bridge B4) with the 23S rRNA of the 50S subunit in the ribosome. The polypeptide is Small ribosomal subunit protein uS15 (Francisella philomiragia subsp. philomiragia (strain ATCC 25017 / CCUG 19701 / FSC 153 / O#319-036)).